We begin with the raw amino-acid sequence, 369 residues long: Tsukushi (369 aa).

A signal peptide spans 1–19 (MQFLAWFNMLLLLPCFSTT). One can recognise an LRRNT domain in the interval 20–60 (KTCFPGCHCEVESFGLFDSFSLTKVDCSGIGSHIVPVPIPL). LRR repeat units follow at residues 61 to 81 (DTSY…SMLT), 87 to 108 (TLVS…TFSR), 111 to 132 (YLES…CFSS), 134 to 155 (PLGD…VFAS), 161 to 181 (PLNV…HEKS), 184 to 205 (NIQN…QGIP), 206 to 226 (LRYL…DFKG), 229 to 248 (GLIH…SPYS), 254 to 276 (ALQV…VIFG), 279 to 300 (SIQE…VLKY), and 303 to 323 (SLKS…KEGQ). N-linked (GlcNAc...) asparagine glycosylation occurs at Asn76. An N-linked (GlcNAc...) asparagine glycan is attached at Asn189. Residue Asn284 is glycosylated (N-linked (GlcNAc...) asparagine).

In terms of assembly, forms a ternary complex with chordin/CHRD and BMP4. Interacts with FZD4 (via FZ domain); competes with WNT2B for binding to FZD4, inhibiting Wnt signaling and repressing peripheral eye development. Interacts with BMP4; shows stronger interaction with BMP4 than isoform 2. Interacts with DVR1/VG1; the interaction is inhibited by BMP4. Interacts with BMP7. As to quaternary structure, interacts with FZD4 (via FZ domain); competes with WNT2B for binding to FZD4, inhibiting Wnt signaling and repressing peripheral eye development. Interacts with BMP4; shows weaker interaction with BMP4 than isoform 1. Interacts with DVR1/VG1; the interaction is inhibited by BMP4. Interacts with BMP7. Post-translationally, N-glycosylated. During embryonic development, expressed in the middle primitive streak and Hensen's node. Expressed in the peripheral region of the developing eye. Expressed in the presomitic mesoderm during somitogenesis in a NOTCH-dependent manner.

The protein resides in the secreted. Contributes to various developmental events through its interactions with multiple signaling pathways. Dorsalizing factor involved in the induction of Hensen's node by inhibiting bone morphogenetic proteins during gastrulation and by enhancing DVR1/VG1 activity. Wnt signaling inhibitor which competes with WNT2B for binding to Wnt receptor FZD4 and represses WNT2B-dependent development of the peripheral eye. In terms of biological role, shows strong bone morphogenetic protein antagonistic activity. Its function is as follows. Shows weak bone morphogenetic protein antagonistic activity. This chain is Tsukushi (TSKU), found in Gallus gallus (Chicken).